Consider the following 216-residue polypeptide: Probable GTP-binding protein EngB (216 aa).

Residues 30–204 (SGLEVAFAGR…QMVLAGWLDL (175 aa)) enclose the EngB-type G domain. GTP-binding positions include 38-45 (GRSNAGKS), 64-68 (GRTQL), 82-85 (DLPG), 149-152 (TKAD), and 182-185 (LFSA). 2 residues coordinate Mg(2+): Ser45 and Thr66.

Belongs to the TRAFAC class TrmE-Era-EngA-EngB-Septin-like GTPase superfamily. EngB GTPase family. Requires Mg(2+) as cofactor.

Necessary for normal cell division and for the maintenance of normal septation. In Ectopseudomonas mendocina (strain ymp) (Pseudomonas mendocina), this protein is Probable GTP-binding protein EngB.